Consider the following 426-residue polypeptide: MDVGDFVKIKMENTMYCGTLMPSINEDTIVVKMKSGYNVGLKKTKIKSIEILKPENSSNFQPLTSSNNEFKPLNLEKNPNLKNISILSTGGTVASRVDYKTGAVHPAFTANDLIRAVPELLDIANIKGRAILNILSENMLPKYWVMTAEAIKEEIENGAEGIVITHGTDTMHYTAAALSFMVESEVPIILVGAQRSSDRPSSDAALNIISAVMAATEPIKGVYVVMHGEIDDTICNLHEGVKVRKLHSSRRDAFKSVNNTPVAKINPFTKEITYLREIKPQNSSKIKKVSINKKLEEKIALIKVYPGIDSEILKFYVDKGYKAIVLEGTGLGHTPETFFSGIDYANKNNVLVLMSTQTINGRVNMNIYSNGRELQSLGVLPCEDILSEVLFVKIMHLLGNYDLKDAKKLICKNRVGEINESINLKY.

An Asparaginase/glutaminase domain is found at 82–413 (KNISILSTGG…KDAKKLICKN (332 aa)). Catalysis depends on residues Thr-92, Thr-168, Asp-169, and Lys-245.

It belongs to the asparaginase 1 family. GatD subfamily. As to quaternary structure, heterodimer of GatD and GatE.

It carries out the reaction L-glutamyl-tRNA(Gln) + L-glutamine + ATP + H2O = L-glutaminyl-tRNA(Gln) + L-glutamate + ADP + phosphate + H(+). In terms of biological role, allows the formation of correctly charged Gln-tRNA(Gln) through the transamidation of misacylated Glu-tRNA(Gln) in organisms which lack glutaminyl-tRNA synthetase. The reaction takes place in the presence of glutamine and ATP through an activated gamma-phospho-Glu-tRNA(Gln). The GatDE system is specific for glutamate and does not act on aspartate. The chain is Glutamyl-tRNA(Gln) amidotransferase subunit D from Methanococcus vannielii (strain ATCC 35089 / DSM 1224 / JCM 13029 / OCM 148 / SB).